We begin with the raw amino-acid sequence, 155 residues long: SsrA-binding protein (155 aa).

It belongs to the SmpB family.

The protein localises to the cytoplasm. In terms of biological role, required for rescue of stalled ribosomes mediated by trans-translation. Binds to transfer-messenger RNA (tmRNA), required for stable association of tmRNA with ribosomes. tmRNA and SmpB together mimic tRNA shape, replacing the anticodon stem-loop with SmpB. tmRNA is encoded by the ssrA gene; the 2 termini fold to resemble tRNA(Ala) and it encodes a 'tag peptide', a short internal open reading frame. During trans-translation Ala-aminoacylated tmRNA acts like a tRNA, entering the A-site of stalled ribosomes, displacing the stalled mRNA. The ribosome then switches to translate the ORF on the tmRNA; the nascent peptide is terminated with the 'tag peptide' encoded by the tmRNA and targeted for degradation. The ribosome is freed to recommence translation, which seems to be the essential function of trans-translation. The polypeptide is SsrA-binding protein (Streptococcus agalactiae serotype Ia (strain ATCC 27591 / A909 / CDC SS700)).